Consider the following 662-residue polypeptide: Phosphomethylpyrimidine synthase (662 aa).

Substrate is bound by residues N235, M264, Y293, H329, 349 to 351 (SRG), 390 to 393 (DGMR), and E429. H433 provides a ligand contact to Zn(2+). Position 456 (Y456) interacts with substrate. H497 lines the Zn(2+) pocket. C577, C580, and C585 together coordinate [4Fe-4S] cluster.

It belongs to the ThiC family. In terms of assembly, homodimer. Requires [4Fe-4S] cluster as cofactor.

It catalyses the reaction 5-amino-1-(5-phospho-beta-D-ribosyl)imidazole + S-adenosyl-L-methionine = 4-amino-2-methyl-5-(phosphooxymethyl)pyrimidine + CO + 5'-deoxyadenosine + formate + L-methionine + 3 H(+). Its pathway is cofactor biosynthesis; thiamine diphosphate biosynthesis. Its function is as follows. Catalyzes the synthesis of the hydroxymethylpyrimidine phosphate (HMP-P) moiety of thiamine from aminoimidazole ribotide (AIR) in a radical S-adenosyl-L-methionine (SAM)-dependent reaction. This chain is Phosphomethylpyrimidine synthase, found in Shewanella halifaxensis (strain HAW-EB4).